A 286-amino-acid chain; its full sequence is Aquaporin PIP2-4 (286 aa).

Helical transmembrane passes span 40–60 and 77–97; these read ALIA…ATVI and CGGV…FILV. An NPA 1 motif is present at residues 109 to 111; that stretch reads NPA. A run of 3 helical transmembrane segments spans residues 128-148, 170-190, and 204-224; these read LLYM…VKGF, GTGL…VFSA, and VLAP…TIPI. The NPA 2 signature appears at 230 to 232; the sequence is NPA. A helical transmembrane segment spans residues 252 to 272; it reads IFWVGPFIGAAIAALYHQVIL.

This sequence belongs to the MIP/aquaporin (TC 1.A.8) family. PIP (TC 1.A.8.11) subfamily. Expressed in roots.

It is found in the cell membrane. In terms of biological role, water channel required to facilitate the transport of water across cell membrane. May play a role in root water uptake. In Oryza sativa subsp. japonica (Rice), this protein is Aquaporin PIP2-4 (PIP2-4).